Here is a 115-residue protein sequence, read N- to C-terminus: NAD(P)H-quinone oxidoreductase subunit M (115 aa).

Belongs to the complex I NdhM subunit family. NDH-1 can be composed of about 15 different subunits; different subcomplexes with different compositions have been identified which probably have different functions.

It is found in the cellular thylakoid membrane. The enzyme catalyses a plastoquinone + NADH + (n+1) H(+)(in) = a plastoquinol + NAD(+) + n H(+)(out). The catalysed reaction is a plastoquinone + NADPH + (n+1) H(+)(in) = a plastoquinol + NADP(+) + n H(+)(out). Its function is as follows. NDH-1 shuttles electrons from an unknown electron donor, via FMN and iron-sulfur (Fe-S) centers, to quinones in the respiratory and/or the photosynthetic chain. The immediate electron acceptor for the enzyme in this species is believed to be plastoquinone. Couples the redox reaction to proton translocation, and thus conserves the redox energy in a proton gradient. Cyanobacterial NDH-1 also plays a role in inorganic carbon-concentration. This chain is NAD(P)H-quinone oxidoreductase subunit M, found in Prochlorococcus marinus (strain MIT 9303).